The following is a 94-amino-acid chain: Co-chaperonin GroES (94 aa).

Belongs to the GroES chaperonin family. Heptamer of 7 subunits arranged in a ring. Interacts with the chaperonin GroEL.

It localises to the cytoplasm. Its function is as follows. Together with the chaperonin GroEL, plays an essential role in assisting protein folding. The GroEL-GroES system forms a nano-cage that allows encapsulation of the non-native substrate proteins and provides a physical environment optimized to promote and accelerate protein folding. GroES binds to the apical surface of the GroEL ring, thereby capping the opening of the GroEL channel. The protein is Co-chaperonin GroES of Leuconostoc citreum (strain KM20).